The sequence spans 364 residues: Dual-specificity RNA methyltransferase RlmN (364 aa).

E91 (proton acceptor) is an active-site residue. The region spanning 97 to 333 (EDDRGTLCVS…VTVRKTRGDD (237 aa)) is the Radical SAM core domain. Cysteines 104 and 338 form a disulfide. 3 residues coordinate [4Fe-4S] cluster: C111, C115, and C118. Residues 164–165 (GE), S196, 218–220 (SLH), and N295 contribute to the S-adenosyl-L-methionine site. C338 functions as the S-methylcysteine intermediate in the catalytic mechanism.

It belongs to the radical SAM superfamily. RlmN family. [4Fe-4S] cluster serves as cofactor.

Its subcellular location is the cytoplasm. The enzyme catalyses adenosine(2503) in 23S rRNA + 2 reduced [2Fe-2S]-[ferredoxin] + 2 S-adenosyl-L-methionine = 2-methyladenosine(2503) in 23S rRNA + 5'-deoxyadenosine + L-methionine + 2 oxidized [2Fe-2S]-[ferredoxin] + S-adenosyl-L-homocysteine. It carries out the reaction adenosine(37) in tRNA + 2 reduced [2Fe-2S]-[ferredoxin] + 2 S-adenosyl-L-methionine = 2-methyladenosine(37) in tRNA + 5'-deoxyadenosine + L-methionine + 2 oxidized [2Fe-2S]-[ferredoxin] + S-adenosyl-L-homocysteine. Its function is as follows. Specifically methylates position 2 of adenine 2503 in 23S rRNA and position 2 of adenine 37 in tRNAs. m2A2503 modification seems to play a crucial role in the proofreading step occurring at the peptidyl transferase center and thus would serve to optimize ribosomal fidelity. The protein is Dual-specificity RNA methyltransferase RlmN of Chromobacterium violaceum (strain ATCC 12472 / DSM 30191 / JCM 1249 / CCUG 213 / NBRC 12614 / NCIMB 9131 / NCTC 9757 / MK).